A 222-amino-acid polypeptide reads, in one-letter code: MKQKPAFIPYAGAQFEPEEMLSKSAEYYQFMDHRRTVREFSNRAIPLEVIENIVMTASTAPSGAHKQPWTFVVVSDPQIKAKIRQAAEKEEFESYNGRMSNEWLEDLQPFGTDWHKPFLEIAPYLIVVFRKAYDVLPDGTQRKNYYVQESVGIACGFLLAAIHQAGLVALTHTPSPMNFLQKILQRPENERPFLLVPVGYPAEGAMVPDLQRKDKAAVMVVY.

FMN is bound by residues 34 to 38 and 61 to 62; these read RRTVR and PS. The 3-iodo-L-tyrosine site is built by Glu-91, Tyr-95, and Lys-116. Residues 171–173 and Arg-212 each bind FMN; that span reads THT.

Belongs to the nitroreductase family. Homodimer. FMN serves as cofactor.

The catalysed reaction is 2 iodide + L-tyrosine + 2 NADP(+) = 3,5-diiodo-L-tyrosine + 2 NADPH + H(+). It carries out the reaction iodide + L-tyrosine + NADP(+) = 3-iodo-L-tyrosine + NADPH. It catalyses the reaction 3-iodo-L-tyrosine + iodide + NADP(+) = 3,5-diiodo-L-tyrosine + NADPH + H(+). The enzyme catalyses L-tyrosine + chloride + NADP(+) = 3-chloro-L-tyrosine + NADPH. The catalysed reaction is bromide + L-tyrosine + NADP(+) = 3-bromo-L-tyrosine + NADPH. Its function is as follows. Catalyzes the dehalogenation of halotyrosines such as 3-iodo-L-tyrosine and 3,5-diiodo-L-tyrosine. Likely to also catalyze the dehalogenation of other halotyrosines such as 3-bromo-L-tyrosine, 3-chloro-L-tyrosine and 3-iodo-L-tyrosine. Activity towards 3-iodo-L-tyrosine is much stronger than activity towards 3,5-diiodo-L-tyrosine and 2-iodophenol. The protein is Iodotyrosine deiodinase of Haliscomenobacter hydrossis (strain ATCC 27775 / DSM 1100 / LMG 10767 / O).